The following is an 807-amino-acid chain: Glycerol-3-phosphate acyltransferase (807 aa).

Residues 308–313 (CHRSHM) carry the HXXXXD motif motif.

The protein belongs to the GPAT/DAPAT family.

Its subcellular location is the cell inner membrane. It catalyses the reaction sn-glycerol 3-phosphate + an acyl-CoA = a 1-acyl-sn-glycero-3-phosphate + CoA. It participates in phospholipid metabolism; CDP-diacylglycerol biosynthesis; CDP-diacylglycerol from sn-glycerol 3-phosphate: step 1/3. The protein is Glycerol-3-phosphate acyltransferase of Shewanella sp. (strain ANA-3).